Consider the following 370-residue polypeptide: Protein phosphatase 2C homolog 2 (370 aa).

Residues 23-291 enclose the PPM-type phosphatase domain; it reads HFGVSHMQGW…DNMTICIVAF (269 aa). 4 residues coordinate Mn(2+): Asp-63, Gly-64, Asp-233, and Asp-282. 2 positions are modified to phosphoserine: Ser-355 and Ser-357.

This sequence belongs to the PP2C family. Monomer. Requires Mg(2+) as cofactor. It depends on Mn(2+) as a cofactor.

Its subcellular location is the nucleus. The protein resides in the cytoplasm. The protein localises to the cytosol. The catalysed reaction is O-phospho-L-seryl-[protein] + H2O = L-seryl-[protein] + phosphate. It catalyses the reaction O-phospho-L-threonyl-[protein] + H2O = L-threonyl-[protein] + phosphate. Activity is reduced when phosphosrylated at Ser-355/Ser-357. Its function is as follows. Dephosphorylating regulator for many key proteins. Has an important role in osmotic stability and cell shape control. It may negatively regulate the osmosensing signal transmitted through wis1 map kinase. In Schizosaccharomyces pombe (strain 972 / ATCC 24843) (Fission yeast), this protein is Protein phosphatase 2C homolog 2 (ptc2).